The sequence spans 398 residues: MSQKLVLILNCGSSSLKFAILDPVSGAEKLSGLAEAFYLPDARIKWKLNGEKGNADLGAGAAHSEALNFIVSTILTEDLKNSIAAIGHRVVHGGEKYTKSVVITDEVIQGIKDAAEFAPLHNPAHLIGIEEAFKAFPHLKDNNVAIFDTAFHQTMPEEAFLYALPYSLYKEHGVRRYGMHGTSHYFVSREAAKRLNIAEDKINVITCHLGNGASVAAIRQGKCIDTSMGFTPLEGLVMGTRSGDLDPAIIFYMHNTLGMSVAQIEETLVKKSGLLGLTEVTSDCRYSEDNYEKESAAKRALDVFCYRLAKYIGSYMAIIGENLDAIVFTGGIGENAALVRQITLNHLKLFGYKIDDEKNSAARFGNEGVITADNTPIAIVIPTNEELVIAQDTARLSF.

Asn-10 contributes to the Mg(2+) binding site. Lys-17 is an ATP binding site. Arg-89 contacts substrate. Asp-148 acts as the Proton donor/acceptor in catalysis. ATP-binding positions include 208–212 (HLGNG), 283–285 (DCR), and 331–335 (GIGEN). Glu-385 is a binding site for Mg(2+).

It belongs to the acetokinase family. Homodimer. Mg(2+) serves as cofactor. It depends on Mn(2+) as a cofactor.

It localises to the cytoplasm. It carries out the reaction acetate + ATP = acetyl phosphate + ADP. It participates in metabolic intermediate biosynthesis; acetyl-CoA biosynthesis; acetyl-CoA from acetate: step 1/2. Catalyzes the formation of acetyl phosphate from acetate and ATP. Can also catalyze the reverse reaction. The protein is Acetate kinase of Histophilus somni (strain 129Pt) (Haemophilus somnus).